We begin with the raw amino-acid sequence, 336 residues long: L-rhamnono-gamma-lactonase (336 aa).

It belongs to the metallo-dependent hydrolases superfamily. It depends on a divalent metal cation as a cofactor.

The enzyme catalyses L-rhamnono-1,4-lactone + H2O = L-rhamnonate + H(+). Inhibited by Zn(2+), Fe(2+) and Cu(2+), but not by EDTA. In terms of biological role, hydrolase with high substrate specificity for L-rhamnono-1,4-lactone. Catalyzes the second step in an alternative pathway for rhamnose utilization that does not involve phosphorylated intermediates. This chain is L-rhamnono-gamma-lactonase (LRA2), found in Scheffersomyces stipitis (strain ATCC 58785 / CBS 6054 / NBRC 10063 / NRRL Y-11545) (Yeast).